Consider the following 482-residue polypeptide: Type II methyltransferase M.AvaI (482 aa).

Belongs to the N(4)/N(6)-methyltransferase family. N(4) subfamily.

The enzyme catalyses a 2'-deoxycytidine in DNA + S-adenosyl-L-methionine = an N(4)-methyl-2'-deoxycytidine in DNA + S-adenosyl-L-homocysteine + H(+). Its function is as follows. An alpha subtype methylase that recognizes the double-stranded sequence 5'-CYCGRG-3', methylates C-1 on both strands, and protects the DNA from cleavage by the AvaI endonuclease. The protein is Type II methyltransferase M.AvaI of Anabaena variabilis.